A 1208-amino-acid polypeptide reads, in one-letter code: ATP-dependent DNA helicase Q4 (1208 aa).

Disordered stretches follow at residues Ala17 to Ser180 and Phe201 to Ala333. Phosphoserine is present on Ser27. Residues Glu36–Thr47 are compositionally biased toward basic and acidic residues. Positions Ser61–Glu70 are enriched in low complexity. A compositionally biased stretch (polar residues) spans Ala86 to Gly100. A phosphoserine mark is found at Ser178 and Ser180. Positions Ala273 to Gly283 are enriched in polar residues. Residues Val489–Pro662 form the Helicase ATP-binding domain. Residue Leu502–Ser509 coordinates ATP. A DEAH box motif is present at residues Asp605–His608. A Helicase C-terminal domain is found at Asp683–Phe850. Zn(2+)-binding residues include Cys853 and Cys855. Residues Pro860 to Gln888 form a disordered region. Positions 897 and 900 each coordinate Zn(2+). The interval Glu1111 to Ala1130 is disordered. Positions Gly1117–Arg1208 are increases helicase activity about 5-fold (in a fragment starting at residue 427).

It belongs to the helicase family. RecQ subfamily. As to quaternary structure, interacts with UBR1 and UBR2. Interacts with MCM10; this interaction regulates RECQL4 unwinding activity. Interacts (via residues 1-54) with TOPBP1. Zn(2+) is required as a cofactor. In terms of tissue distribution, ubiquitously expressed, with highest levels in thymus and testis.

The protein resides in the cytoplasm. The protein localises to the nucleus. The catalysed reaction is Couples ATP hydrolysis with the unwinding of duplex DNA by translocating in the 3'-5' direction.. It carries out the reaction ATP + H2O = ADP + phosphate + H(+). Functionally, an ATP-dependent DNA helicase which unwinds dsDNA with a 3'-overhang in a 3'-5' direction. Does not unwind more than 18 bp of dsDNA. May modulate chromosome segregation. The N-terminal domain (residues 1-54) binds DNA Y-shaped DNA better than ss- or dsDNA. The core helicase domain binds ssDNA. In Homo sapiens (Human), this protein is ATP-dependent DNA helicase Q4 (RECQL4).